The sequence spans 634 residues: Kelch-like protein 22 (634 aa).

Alanine 2 bears the N-acetylalanine mark. Residues 50-117 enclose the BTB domain; the sequence is FDVVLVVEGR…IYTSELELSL (68 aa). Kelch repeat units follow at residues 299-349, 350-399, 400-446, 448-493, 494-544, and 545-593; these read CVVG…VLNN, FVYL…VVGK, YIYA…TLQG, MYIT…ALLD, KLFV…VLDN, and RIYV…VLTL. Threonine 463 carries the post-translational modification Phosphothreonine. The residue at position 466 (tyrosine 466) is a Phosphotyrosine. Threonine 475 bears the Phosphothreonine mark. Positions 600–634 are disordered; it reads EQPRGTPNRSQADADFASEVMSVSDWEEFDNSSED. The residue at position 605 (threonine 605) is a Phosphothreonine. The span at 624–634 shows a compositional bias: acidic residues; it reads DWEEFDNSSED.

As to quaternary structure, component of the BCR(KLHL22) E3 ubiquitin ligase complex, at least composed of CUL3, KLHL22 and RBX1. Interacts with PLK1. Interacts with DEPDC5 (via DEP domain); the interaction depends on amino acid availability. Interacts with YWHAE; required for the nuclear localization of KLHL22 upon amino acid starvation.

The protein localises to the cytoplasm. It is found in the cytosol. Its subcellular location is the cytoskeleton. It localises to the microtubule organizing center. The protein resides in the centrosome. The protein localises to the spindle. It is found in the nucleus. Its subcellular location is the lysosome. It functions in the pathway protein modification; protein ubiquitination. In terms of biological role, substrate-specific adapter of a BCR (BTB-CUL3-RBX1) E3 ubiquitin ligase complex required for chromosome alignment and localization of PLK1 at kinetochores. The BCR(KLHL22) ubiquitin ligase complex mediates monoubiquitination of PLK1, leading to PLK1 dissociation from phosphoreceptor proteins and subsequent removal from kinetochores, allowing silencing of the spindle assembly checkpoint (SAC) and chromosome segregation. Monoubiquitination of PLK1 does not lead to PLK1 degradation. The BCR(KLHL22) ubiquitin ligase complex is also responsible for the amino acid-stimulated 'Lys-48' polyubiquitination and proteasomal degradation of DEPDC5. Through the degradation of DEPDC5, releases the GATOR1 complex-mediated inhibition of the TORC1 pathway. It is therefore an amino acid-dependent activator within the amino acid-sensing branch of the TORC1 pathway, indirectly regulating different cellular processes including cell growth and autophagy. The chain is Kelch-like protein 22 from Rattus norvegicus (Rat).